We begin with the raw amino-acid sequence, 278 residues long: Proteolipid protein DM beta (278 aa).

The next 4 helical transmembrane spans lie at 30–46 (LIATILLYAGVALFCGC), 84–100 (VIYGVAAAFFVYGILLM), 130–146 (FIMLTYIFMLAWLGVTA), and 213–229 (LFIVALAGAGAAVIAMV).

It belongs to the myelin proteolipid protein family.

The protein localises to the membrane. The chain is Proteolipid protein DM beta from Squalus acanthias (Spiny dogfish).